The primary structure comprises 84 residues: Large ribosomal subunit protein bL31B (84 aa).

It belongs to the bacterial ribosomal protein bL31 family. Type B subfamily. As to quaternary structure, part of the 50S ribosomal subunit.

In Parabacteroides distasonis (strain ATCC 8503 / DSM 20701 / CIP 104284 / JCM 5825 / NCTC 11152), this protein is Large ribosomal subunit protein bL31B.